We begin with the raw amino-acid sequence, 570 residues long: Proline--tRNA ligase (570 aa).

It belongs to the class-II aminoacyl-tRNA synthetase family. ProS type 1 subfamily. Homodimer.

The protein localises to the cytoplasm. It carries out the reaction tRNA(Pro) + L-proline + ATP = L-prolyl-tRNA(Pro) + AMP + diphosphate. In terms of biological role, catalyzes the attachment of proline to tRNA(Pro) in a two-step reaction: proline is first activated by ATP to form Pro-AMP and then transferred to the acceptor end of tRNA(Pro). As ProRS can inadvertently accommodate and process non-cognate amino acids such as alanine and cysteine, to avoid such errors it has two additional distinct editing activities against alanine. One activity is designated as 'pretransfer' editing and involves the tRNA(Pro)-independent hydrolysis of activated Ala-AMP. The other activity is designated 'posttransfer' editing and involves deacylation of mischarged Ala-tRNA(Pro). The misacylated Cys-tRNA(Pro) is not edited by ProRS. This Geotalea daltonii (strain DSM 22248 / JCM 15807 / FRC-32) (Geobacter daltonii) protein is Proline--tRNA ligase.